The sequence spans 358 residues: MRFSQLIAVLKNGDAGVLSTSEGRDPELRGAASLERATADQLSFLEKGNALVGSLESSEAGAVLIPDQQELRELAERLQLAWAVCGDPRLAFAEALEQLHPKPSPQAGIHASAVIADRVQLGAGVSIGARVCIGDDTRIGPRTVIHPGVVIYGNVDIGEGCELHANAVLHPGSRIGDRCVVHSNAVVGSEGFGFVPTAKGWRKMPQTGLVVLEDGVEVGCGSTIDRPSVGETRIGSGTKIDNLVQIGHGVVTGRGCALASQVGIAGGAQLGHGVILAGQVGVANRAVIGDRAIASSKSGIHGEVAAGEVVSGYPAIPNRLWLRCSAAFSKLPEMAKQLRELKKQVSSEATGGSIEADQ.

H248 functions as the Proton acceptor in the catalytic mechanism.

Belongs to the transferase hexapeptide repeat family. LpxD subfamily. Homotrimer.

It catalyses the reaction a UDP-3-O-[(3R)-3-hydroxyacyl]-alpha-D-glucosamine + a (3R)-hydroxyacyl-[ACP] = a UDP-2-N,3-O-bis[(3R)-3-hydroxyacyl]-alpha-D-glucosamine + holo-[ACP] + H(+). Its pathway is bacterial outer membrane biogenesis; LPS lipid A biosynthesis. Catalyzes the N-acylation of UDP-3-O-acylglucosamine using 3-hydroxyacyl-ACP as the acyl donor. Is involved in the biosynthesis of lipid A, a phosphorylated glycolipid that anchors the lipopolysaccharide to the outer membrane of the cell. This Synechococcus sp. (strain WH7803) protein is UDP-3-O-acylglucosamine N-acyltransferase.